The sequence spans 44 residues: Putative keratin-associated protein 20-4 (44 aa).

Belongs to the KRTAP type 20 family. As to quaternary structure, interacts with hair keratins.

In terms of biological role, in the hair cortex, hair keratin intermediate filaments are embedded in an interfilamentous matrix, consisting of hair keratin-associated proteins (KRTAP), which are essential for the formation of a rigid and resistant hair shaft through their extensive disulfide bond cross-linking with abundant cysteine residues of hair keratins. The matrix proteins include the high-sulfur and high-glycine-tyrosine keratins. The protein is Putative keratin-associated protein 20-4 (KRTAP20-4) of Homo sapiens (Human).